The chain runs to 217 residues: Peptide deformylase 1 (217 aa).

The Fe cation site is built by Cys-129 and His-171. Glu-172 is a catalytic residue. Residue His-175 participates in Fe cation binding.

Belongs to the polypeptide deformylase family. Requires Fe(2+) as cofactor.

The enzyme catalyses N-terminal N-formyl-L-methionyl-[peptide] + H2O = N-terminal L-methionyl-[peptide] + formate. Its function is as follows. Removes the formyl group from the N-terminal Met of newly synthesized proteins. Requires at least a dipeptide for an efficient rate of reaction. N-terminal L-methionine is a prerequisite for activity but the enzyme has broad specificity at other positions. This Bifidobacterium longum (strain NCC 2705) protein is Peptide deformylase 1.